A 328-amino-acid chain; its full sequence is Ethanol acetyltransferase 1 (328 aa).

The region spanning 39 to 309 is the AB hydrolase-1 domain; the sequence is PAIINIHGLL…TGHNLLLENP (271 aa). Catalysis depends on charge relay system residues serine 115, aspartate 139, and histidine 302.

Belongs to the AB hydrolase superfamily.

The protein localises to the mitochondrion. It carries out the reaction ethanol + acetyl-CoA = ethyl acetate + CoA. It catalyses the reaction acetyl-CoA + H2O = acetate + CoA + H(+). The enzyme catalyses ethyl acetate + H2O = ethanol + acetate + H(+). Its function is as follows. Alcohol acetyltransferase that catalyzes the synthesis of ethyl acetate from ethanol and acetyl-CoA. Can also function as a thioesterase by hydrolyzing acetyl-CoA in the absence of ethanol, as well as esterase hydrolyzing ethyl acetate. The sequence is that of Ethanol acetyltransferase 1 from Saccharomyces cerevisiae (strain ATCC 204508 / S288c) (Baker's yeast).